The primary structure comprises 298 residues: Mitochondrial distribution and morphology protein 12 (298 aa).

Residues 1-298 (MSIELDWTGL…VYPHFYTLYL (298 aa)) enclose the SMP-LTD domain. The disordered stretch occupies residues 118–142 (SEHEESLSRWSDTESETGTCDSSSL). Positions 133–142 (ETGTCDSSSL) are enriched in polar residues.

It belongs to the MDM12 family. Component of the ER-mitochondria encounter structure (ERMES) or MDM complex, composed of MMM1, MDM10, MDM12 and MDM34. An MMM1 homodimer associates with one molecule of MDM12 on each side in a pairwise head-to-tail manner, and the SMP-LTD domains of MMM1 and MDM12 generate a continuous hydrophobic tunnel for phospholipid trafficking.

The protein resides in the mitochondrion outer membrane. The protein localises to the endoplasmic reticulum membrane. Its function is as follows. Component of the ERMES/MDM complex, which serves as a molecular tether to connect the endoplasmic reticulum (ER) and mitochondria. Components of this complex are involved in the control of mitochondrial shape and protein biogenesis, and function in nonvesicular lipid trafficking between the ER and mitochondria. MDM12 is required for the interaction of the ER-resident membrane protein MMM1 and the outer mitochondrial membrane-resident beta-barrel protein MDM10. The MDM12-MMM1 subcomplex functions in the major beta-barrel assembly pathway that is responsible for biogenesis of all mitochondrial outer membrane beta-barrel proteins, and acts in a late step after the SAM complex. The MDM10-MDM12-MMM1 subcomplex further acts in the TOM40-specific pathway after the action of the MDM12-MMM1 complex. Essential for establishing and maintaining the structure of mitochondria and maintenance of mtDNA nucleoids. The polypeptide is Mitochondrial distribution and morphology protein 12 (Malassezia globosa (strain ATCC MYA-4612 / CBS 7966) (Dandruff-associated fungus)).